A 126-amino-acid polypeptide reads, in one-letter code: Small ribosomal subunit protein uS13 (126 aa).

A disordered region spans residues 94-126 (RNLPVHGQRTHTNARTRKGPRRAIAGKKKAGKK).

It belongs to the universal ribosomal protein uS13 family. In terms of assembly, part of the 30S ribosomal subunit. Forms a loose heterodimer with protein S19. Forms two bridges to the 50S subunit in the 70S ribosome.

Located at the top of the head of the 30S subunit, it contacts several helices of the 16S rRNA. In the 70S ribosome it contacts the 23S rRNA (bridge B1a) and protein L5 of the 50S subunit (bridge B1b), connecting the 2 subunits; these bridges are implicated in subunit movement. Contacts the tRNAs in the A and P-sites. The chain is Small ribosomal subunit protein uS13 from Parafrankia sp. (strain EAN1pec).